Consider the following 582-residue polypeptide: Protein LYRIC (582 aa).

Residues 1–48 lie on the Lumenal side of the membrane; the sequence is MAARSWQDELAQQAEEGSARLREMLSVGLGFLRTELGLDLGLEPKRYP. Residues 1-71 form an activation of NF-kappa-B region; that stretch reads MAARSWQDEL…LLLFLLGYGW (71 aa). Residues 49-69 traverse the membrane as a helical segment; the sequence is GWVILVGTGALGLLLLFLLGY. The Cytoplasmic portion of the chain corresponds to 70–582; sequence GWAAACAGAR…KKKKKARRET (513 aa). Residues 72–169 form an interaction with BCCIP region; sequence AAACAGARKK…EKSKKNKKKS (98 aa). The interval 78 to 222 is disordered; it reads ARKKRRSPPR…DSGSLDSTIP (145 aa). Positions 93–106 are enriched in low complexity; the sequence is AAVPAAAPDDLALL. The segment at 101-205 is interaction with RELA; it reads DDLALLKNLR…ISHREKRQQR (105 aa). Over residues 109–127 the composition is skewed to basic and acidic residues; the sequence is LRSEEQKKKNRKKLSEKPK. A Phosphothreonine modification is found at Thr143. Over residues 160-169 the composition is skewed to basic residues; the sequence is EKSKKNKKKS. Residue Ser180 is modified to Phosphoserine. A compositionally biased stretch (basic residues) spans 198 to 208; the sequence is HREKRQQRKRD. Residues Ser216 and Ser251 each carry the phosphoserine modification. Lys264 carries the N6-acetyllysine modification. Residues 280–582 are disordered; the sequence is TVNGGGWNEK…KKKKKARRET (303 aa). Residues Ser298, Ser306, Ser308, Ser311, Ser323, Ser339, Ser344, and Ser369 each carry the phosphoserine modification. Residues 320-333 are compositionally biased toward polar residues; it reads SAWSQDTGDANTNG. Composition is skewed to polar residues over residues 354–372 and 383–394; these read EPVSQSTTSDYQWDVSRNQ and NGLSSADPNSDW. Residues 381-443 are lung-homing for mammary tumors; the sequence is GLNGLSSADP…EGALPTGKSK (63 aa). A phosphoserine mark is found at Ser415 and Ser426. The segment covering 421-434 has biased composition (basic and acidic residues); the sequence is DDQKVSDDDKEKGE. A compositionally biased stretch (basic residues) spans 441 to 451; that stretch reads KSKKKKKKKKK. A Phosphoserine modification is found at Ser457. Thr458 carries the phosphothreonine modification. 3 positions are modified to phosphoserine: Ser478, Ser494, and Ser496. Polar residues-rich tracts occupy residues 504 to 520 and 549 to 568; these read KNSQPIKTLPPATSTEP and NTKQNSVPPSQTKSETSWES. Ser568 carries the phosphoserine modification. The span at 571-582 shows a compositional bias: basic residues; sequence QIKKKKKARRET.

Interacts with BCCIP, CREBBP/CBP and RELA/p65. As to expression, widely expressed with highest levels in muscle-dominating organs such as skeletal muscle, heart, tongue and small intestine and in endocrine glands such as thyroid and adrenal gland. Overexpressed in various cancers including breast, brain, prostate, melanoma and glioblastoma multiforme.

It is found in the endoplasmic reticulum membrane. Its subcellular location is the nucleus membrane. The protein resides in the cell junction. The protein localises to the tight junction. It localises to the nucleus. It is found in the nucleolus. Its subcellular location is the cytoplasm. The protein resides in the perinuclear region. In terms of biological role, down-regulates SLC1A2/EAAT2 promoter activity when expressed ectopically. Activates the nuclear factor kappa-B (NF-kappa-B) transcription factor. Promotes anchorage-independent growth of immortalized melanocytes and astrocytes which is a key component in tumor cell expansion. Promotes lung metastasis and also has an effect on bone and brain metastasis, possibly by enhancing the seeding of tumor cells to the target organ endothelium. Induces chemoresistance. In Homo sapiens (Human), this protein is Protein LYRIC (MTDH).